A 209-amino-acid polypeptide reads, in one-letter code: Probable peptide export ATP-binding protein YydI (209 aa).

The ABC transporter domain maps to 1-207 (MNIANYTLKV…SVDKLIEVYI (207 aa)). 33-40 (GKNGVGKS) lines the ATP pocket.

It belongs to the ABC transporter superfamily. In terms of assembly, the complex is composed of two ATP-binding proteins (YydI), two transmembrane proteins (YydJ).

Its function is as follows. Suggested to be part of an ABC transporter complex YydIJ involved in export of the modified peptide YydF. Responsible for energy coupling to the transport system. This is Probable peptide export ATP-binding protein YydI (yydI) from Bacillus subtilis (strain 168).